Reading from the N-terminus, the 574-residue chain is 3-hydroxy-3-methylglutaryl-coenzyme A reductase 3 (574 aa).

Residues 1-30 (MDVRRRPVKPLYPSEHISSGEPLKPHNQDS) are disordered. A helical transmembrane segment spans residues 41–61 (PLYLTNGLFFTMFFSVMYFLL). An N-linked (GlcNAc...) asparagine glycan is attached at asparagine 78. Residues 83 to 103 (VAMVSLIASVIYLLGFFGIGF) traverse the membrane as a helical segment. Residues 104 to 161 (VQSFVSKGNNDSWDVEDESPEQFIDRTVTPPPVRRNIPMKSVPVAEKTAQIITPFSSE) form a linker region. An N-linked (GlcNAc...) asparagine glycan is attached at asparagine 113. Positions 162–574 (DDEVVIKSVV…YNRSCKDVTK (413 aa)) are catalytic. The active-site Charge relay system is glutamate 256. A glycan (N-linked (GlcNAc...) asparagine) is linked at asparagine 320. Catalysis depends on lysine 388, which acts as the Charge relay system. N-linked (GlcNAc...) asparagine glycosylation occurs at asparagine 433. Catalysis depends on aspartate 464, which acts as the Charge relay system. Histidine 562 functions as the Proton donor in the catalytic mechanism. Asparagine 566 carries N-linked (GlcNAc...) asparagine glycosylation.

Belongs to the HMG-CoA reductase family. In terms of tissue distribution, expressed in mature petals and anthers.

It localises to the endoplasmic reticulum membrane. The enzyme catalyses (R)-mevalonate + 2 NADP(+) + CoA = (3S)-3-hydroxy-3-methylglutaryl-CoA + 2 NADPH + 2 H(+). It functions in the pathway metabolic intermediate biosynthesis; (R)-mevalonate biosynthesis; (R)-mevalonate from acetyl-CoA: step 3/3. Catalyzes the synthesis of mevalonate. The specific precursor of all isoprenoid compounds present in plants. This Solanum tuberosum (Potato) protein is 3-hydroxy-3-methylglutaryl-coenzyme A reductase 3 (HMG3).